Here is a 673-residue protein sequence, read N- to C-terminus: Polyadenylate-binding protein, cytoplasmic and nuclear (673 aa).

Positions 1-39 are disordered; that stretch reads MSAETATSPAPAAETPVAPAPATQTTPAEGAPTPAAAAP. RRM domains are found at residues 46–124, 134–211, 227–304, and 330–407; these read ASLY…WSQR, GNIF…HHVG, TNVY…RAQT, and VNLY…LAQR. The segment at 300–322 is disordered; that stretch reads GRAQTKSEREAELKKSHEEKRLE. The span at 304 to 322 shows a compositional bias: basic and acidic residues; the sequence is TKSEREAELKKSHEEKRLE. 2 disordered regions span residues 509–572 and 644–673; these read APGY…AGRL and WGKDEKPAADEGAEEPKKEEEETKEEEKKE. Residues 569 to 646 enclose the PABC domain; the sequence is AGRLDAQSLA…ALRVLAEWGK (78 aa).

This sequence belongs to the polyadenylate-binding protein type-1 family.

It localises to the cytoplasm. Its subcellular location is the nucleus. In terms of biological role, binds the poly(A) tail of mRNA. Appears to be an important mediator of the multiple roles of the poly(A) tail in mRNA biogenesis, stability and translation. In the nucleus, involved in both mRNA cleavage and polyadenylation. Is also required for efficient mRNA export to the cytoplasm. Acts in concert with a poly(A)-specific nuclease (PAN) to affect poly(A) tail shortening, which may occur concomitantly with either nucleocytoplasmic mRNA transport or translational initiation. In the cytoplasm, stimulates translation initiation and regulates mRNA decay through translation termination-coupled poly(A) shortening, probably mediated by PAN. In Cryptococcus neoformans var. neoformans serotype D (strain B-3501A) (Filobasidiella neoformans), this protein is Polyadenylate-binding protein, cytoplasmic and nuclear (PAB1).